Consider the following 30-residue polypeptide: L-serine dehydratase, alpha chain (30 aa).

Belongs to the iron-sulfur dependent L-serine dehydratase family. As to quaternary structure, heterodimer of an alpha chain and a beta chain. It depends on [4Fe-4S] cluster as a cofactor.

It catalyses the reaction L-serine = pyruvate + NH4(+). The protein operates within carbohydrate biosynthesis; gluconeogenesis. This is L-serine dehydratase, alpha chain from Anaerotignum propionicum (Clostridium propionicum).